The sequence spans 162 residues: NAD(P)H-quinone oxidoreductase subunit N (162 aa).

Belongs to the complex I NdhN subunit family. As to quaternary structure, NDH-1 can be composed of about 15 different subunits; different subcomplexes with different compositions have been identified which probably have different functions.

The protein localises to the cellular thylakoid membrane. The enzyme catalyses a plastoquinone + NADH + (n+1) H(+)(in) = a plastoquinol + NAD(+) + n H(+)(out). It catalyses the reaction a plastoquinone + NADPH + (n+1) H(+)(in) = a plastoquinol + NADP(+) + n H(+)(out). In terms of biological role, NDH-1 shuttles electrons from an unknown electron donor, via FMN and iron-sulfur (Fe-S) centers, to quinones in the respiratory and/or the photosynthetic chain. The immediate electron acceptor for the enzyme in this species is believed to be plastoquinone. Couples the redox reaction to proton translocation, and thus conserves the redox energy in a proton gradient. Cyanobacterial NDH-1 also plays a role in inorganic carbon-concentration. The protein is NAD(P)H-quinone oxidoreductase subunit N of Nostoc sp. (strain PCC 7120 / SAG 25.82 / UTEX 2576).